A 92-amino-acid polypeptide reads, in one-letter code: Small ribosomal subunit protein uS19 (92 aa).

The protein belongs to the universal ribosomal protein uS19 family.

Protein S19 forms a complex with S13 that binds strongly to the 16S ribosomal RNA. The protein is Small ribosomal subunit protein uS19 of Treponema denticola (strain ATCC 35405 / DSM 14222 / CIP 103919 / JCM 8153 / KCTC 15104).